Here is a 239-residue protein sequence, read N- to C-terminus: tRNA1(Val) (adenine(37)-N6)-methyltransferase (239 aa).

This sequence belongs to the methyltransferase superfamily. tRNA (adenine-N(6)-)-methyltransferase family.

It localises to the cytoplasm. It catalyses the reaction adenosine(37) in tRNA1(Val) + S-adenosyl-L-methionine = N(6)-methyladenosine(37) in tRNA1(Val) + S-adenosyl-L-homocysteine + H(+). Functionally, specifically methylates the adenine in position 37 of tRNA(1)(Val) (anticodon cmo5UAC). The polypeptide is tRNA1(Val) (adenine(37)-N6)-methyltransferase (Vibrio parahaemolyticus serotype O3:K6 (strain RIMD 2210633)).